Consider the following 841-residue polypeptide: Alpha-glucan phosphorylase 2, cytosolic (841 aa).

The interval 1 to 24 is disordered; sequence MANANGKAATSLPEKISAKANPEA. Lys-687 bears the N6-(pyridoxal phosphate)lysine mark.

The protein belongs to the glycogen phosphorylase family. It depends on pyridoxal 5'-phosphate as a cofactor.

It is found in the cytoplasm. It carries out the reaction [(1-&gt;4)-alpha-D-glucosyl](n) + phosphate = [(1-&gt;4)-alpha-D-glucosyl](n-1) + alpha-D-glucose 1-phosphate. Functionally, phosphorylase is an important allosteric enzyme in carbohydrate metabolism. Enzymes from different sources differ in their regulatory mechanisms and in their natural substrates. However, all known phosphorylases share catalytic and structural properties. The chain is Alpha-glucan phosphorylase 2, cytosolic (PHS2) from Arabidopsis thaliana (Mouse-ear cress).